A 1004-amino-acid polypeptide reads, in one-letter code: DNA-directed RNA polymerase subunit beta' (1004 aa).

Mg(2+) is bound by residues Asp388, Asp390, and Asp392. Zn(2+)-binding residues include Cys757, Cys831, Cys838, and Cys841.

This sequence belongs to the RNA polymerase beta' chain family. The RNAP catalytic core consists of 2 alpha, 1 beta, 1 beta' and 1 omega subunit. When a sigma factor is associated with the core the holoenzyme is formed, which can initiate transcription. Mg(2+) serves as cofactor. It depends on Zn(2+) as a cofactor.

It catalyses the reaction RNA(n) + a ribonucleoside 5'-triphosphate = RNA(n+1) + diphosphate. DNA-dependent RNA polymerase catalyzes the transcription of DNA into RNA using the four ribonucleoside triphosphates as substrates. This chain is DNA-directed RNA polymerase subunit beta', found in Oenococcus oeni (Leuconostoc oenos).